Here is a 448-residue protein sequence, read N- to C-terminus: MEGSKASSSTMQVSFVCQRCSQPLKLDTSFKILDRVTIQELTAPLLTTAQAKPGESQEEEANSGEEPFIETRQDGVSRRFIPPARMMSTESANSFTLIGEASDGGTMENLSRRLKVTGDLFDIMSGQTDVDHPLCEECTDTLLDQLDTQLNVTENECQNYKRCLEMLEQMNEGDSEQLQRELKELALEEERLIQELEDVEKNRKVVAENLEKVQAEAERLDQEEAQYQREYSEFKRQQLELDDELKSVENQMRYAQMQLDKLKKTNVFNATFHIWHSGQFGTINNFRLGRLPSAPVEWNEINAAWGQTVLLLHALANKMGLKFQRYRLVPYGNHSYLESLTDKSKELPLYCSGGLRFFWDNKFDHAMVAFLDCVQQFKEEVEKGETRFCLPYRMDVEKGKIEDTGGSGGSYSIKTQFNSEEQWTKALKFMLTNLKWGLAWVSSQFYNK.

An N-acetylmethionine modification is found at methionine 1. Phosphoserine is present on residues serine 14 and serine 29. The disordered stretch occupies residues 47–72 (TTAQAKPGESQEEEANSGEEPFIETR). 3 positions are modified to phosphoserine; by AMPK: serine 88, serine 91, and serine 94. Positions 106–125 (TMENLSRRLKVTGDLFDIMS) match the BH3 motif. The segment at 110–157 (LSRRLKVTGDLFDIMSGQTDVDHPLCEECTDTLLDQLDTQLNVTENEC) is interaction with BCL2 and BCL2L1 isoform Bcl-X(L). Position 117 is a phosphothreonine; by DAPK1 (threonine 117). A coiled-coil region spans residues 140 to 267 (DTLLDQLDTQ…QLDKLKKTNV (128 aa)). Residues 243–448 (DELKSVENQM…AWVSSQFYNK (206 aa)) are evolutionary conserved domain (ECD). Glycyl lysine isopeptide (Lys-Gly) (interchain with G-Cter in ubiquitin) cross-links involve residues lysine 400 and lysine 435. Residues 423 to 448 (WTKALKFMLTNLKWGLAWVSSQFYNK) form a required for membrane-association region.

Belongs to the beclin family. As to quaternary structure, a homodimeric form is proposed to exist; this metastable form readily transits to ATG14- or UVRAG-containing complexes with BECN1:UVRAG being more stable than BECN1:ATG14. Component of the PI3K (PI3KC3/PI3K-III/class III phosphatidylinositol 3-kinase) complex the core of which is composed of the catalytic subunit PIK3C3, the regulatory subunit PIK3R4 and BECN1 associating with additional regulatory/auxiliary subunits to form alternative complex forms. Alternative complex forms containing a fourth regulatory subunit in a mutually exclusive manner are PI3K complex I (PI3KC3-C1) containing ATG14, and PI3K complex II (PI3KC3-C2) containing UVRAG. PI3KC3-C1 displays a V-shaped architecture with PIK3R4 serving as a bridge between PIK3C3 and the ATG14:BECN1 subcomplex. Both, PI3KC3-C1 and PI3KC3-C2, can associate with further regulatory subunits, such as RUBCN, SH3GLB1/Bif-1 and AMBRA1. PI3KC3-C1 probably associates with PIK3CB. Forms a complex with PPP2CA and AMBRA1; AMBRA1 and BECN1 components of the complex regulate MYC stability via different pathways. Component of the complex, at least composed of LRPPRC, BECN1 and BCL2; the interactions prevent BECN1 from forming an autophagy-inducing complex with PIK3C3. Interacts with AMBRA1, GOPC, GRID2. Interacts with BCL2 and BCL2L1 isoform Bcl-X(L); the interaction inhibits BECN1 function in promoting autophagy by interfering with the formation of the PI3K complex. Interacts with cytosolic HMGB1; inhibits the interaction of BECN1 and BCL2 leading to promotion of autophagy. Interacts with USP10, USP13, DAPK1, RAB39A. Interacts with SLAMF1. Interacts with the poly-Gln domain of ATXN3; the interaction causes deubiquitination at Lys-400 and stabilizes BECN1. Interacts with VMP1. Interacts with TRIM5; the interaction causes activation of BECN1 by causing its dissociation from its inhibitors BCL2 and TAB2. Interacts with active ULK1 (phosphorylated on 'Ser-317') and MEFV simultaneously. Interacts with WDR81 and WDR91; negatively regulates the PI3 kinase/PI3K activity associated with endosomal membranes. Interacts with LAPTM4B; competes with EGFR for LAPTM4B binding; regulates EGFR activity. Interacts with TRIM50. Interacts with TRIM16. Interacts with ATG14; this interaction is increased in the absence of TMEM39A. Interacts with WASHC1; preventing interaction with AMBRA1 and the DCX(AMBRA1) complex and subsequent ubiquitination. Interacts with TRIM17. Interacts with BCL2L10/BCL-B (via BH1 domain). Interacts with SH3BGRL. Interacts with IRGM; enhancing BECN1-interacting partners and influencing the composition of the BECN1 complex. Interacts with ARMC3. Interacts with LRPPRC. Phosphorylation at Thr-117 by DAPK1 reduces its interaction with BCL2 and BCL2L1 and promotes induction of autophagy. In response to autophagic stimuli, phosphorylated at serine residues by AMPK in an ATG14-dependent manner, and this phosphorylation is critical for maximally efficient autophagy. Post-translationally, polyubiquitinated by NEDD4, both with 'Lys-11'- and 'Lys-63'-linkages. 'Lys-11'-linked polyubiquitination leads to degradation and is enhanced when the stabilizing interaction partner VPS34 is depleted. Deubiquitinated by USP10 and USP13, leading to stabilize the PIK3C3/VPS34-containing complexes. Polyubiquitinated at Lys-400 with 'Lys-48'-linkages. 'Lys-48'-linked polyubiquitination of Lys-400 leads to degradation. Deubiquitinated by ATXN3, leading to stabilization. Ubiquitinated at Lys-435 via 'Lys-63'-linkage by the DCX(AMBRA1) complex, thereby increasing the association between BECN1 and PIK3C3 to promote PIK3C3 activity. 'Lys-48'-linked ubiquitination by RNF216 leads to proteasomal degradation and autophagy inhibition. In terms of processing, proteolytically processed by caspases including CASP8 and CASP3; the C-terminal fragments lack autophagy-inducing capacity and are proposed to induce apoptosis. Thus the cleavage is proposed to be an determinant to switch from autophagy to apoptosis pathways affecting cellular homeostasis including viral infections and survival of tumor cells.

The protein resides in the cytoplasm. It localises to the golgi apparatus. It is found in the trans-Golgi network membrane. Its subcellular location is the endosome membrane. The protein localises to the endoplasmic reticulum membrane. The protein resides in the mitochondrion membrane. It localises to the cytoplasmic vesicle. It is found in the autophagosome. Its subcellular location is the mitochondrion. The protein localises to the nucleus. Functionally, plays a central role in autophagy. Acts as a core subunit of the PI3K complex that mediates formation of phosphatidylinositol 3-phosphate; different complex forms are believed to play a role in multiple membrane trafficking pathways: PI3KC3-C1 is involved in initiation of autophagosomes and PI3KC3-C2 in maturation of autophagosomes and endocytosis. Involved in regulation of degradative endocytic trafficking and required for the abscission step in cytokinesis, probably in the context of PI3KC3-C2. Essential for the formation of PI3KC3-C2 but not PI3KC3-C1 PI3K complex forms. Involved in endocytosis. May play a role in antiviral host defense. Beclin-1-C 35 kDa localized to mitochondria can promote apoptosis; it induces the mitochondrial translocation of BAX and the release of proapoptotic factors. This chain is Beclin-1 (Becn1), found in Rattus norvegicus (Rat).